We begin with the raw amino-acid sequence, 629 residues long: Natural resistance-associated macrophage protein 2 homolog (629 aa).

Over 1 to 151 (MNNNNNNKKL…KSKFSIKKLK (151 aa)) the chain is Cytoplasmic. The tract at residues 50 to 119 (NVVNGSIEDS…SDIDSSGDSI (70 aa)) is disordered. Low complexity predominate over residues 62 to 85 (QQQQQQQQQQQQQQQQQQQQQQQQ). The span at 96–105 (DKPFQDRDSN) shows a compositional bias: basic and acidic residues. Positions 106–118 (IGDGSDIDSSGDS) are enriched in low complexity. A helical membrane pass occupies residues 152 to 172 (SFLGPALFISVGYMDPGNWAT). Over 173-182 (DLEGGSRFGY) the chain is Extracellular. Residues 183-203 (QLMWVLLFSNIMALFLQTLVI) form a helical membrane-spanning segment. Residues 204–224 (KLALVTKNDLAQQCRKEYSKT) are Cytoplasmic-facing. Residues 225 to 245 (VNIFLWLILELAIISTDLAEV) form a helical membrane-spanning segment. The Extracellular portion of the chain corresponds to 246 to 253 (IGTAIGLN). A helical membrane pass occupies residues 254 to 274 (ILFGLPLIAGVAITSLDTLLF). Topologically, residues 275 to 286 (LAIQRWGIRKLE) are cytoplasmic. A helical transmembrane segment spans residues 287–307 (LLILLLLSMITMCFVIELFLS). At 308–326 (KPIASEVFSGFVPRLNSDS) the chain is on the extracellular side. The chain crosses the membrane as a helical span at residues 327–347 (VMVATGIVGATTMPHNLFLHG). At 348 to 376 (SVVKSRKIPNDRRKSVIKQAYRYNVIDTV) the chain is on the cytoplasmic side. Residues 377–397 (LALNCAFFVNIAILMLAASVF) form a helical membrane-spanning segment. Topologically, residues 398–421 (WKSNIQVTELSEAYRLLTKLMDGK) are extracellular. The chain crosses the membrane as a helical span at residues 422–442 (LAAVLFGLGLFLAGQSSTITG). Topologically, residues 443-468 (TMAGQIVMEGFIKLRIKPWLRRFITR) are cytoplasmic. Residues 469–489 (LLAIIPAAIVIIVLGDKGTYT) traverse the membrane as a helical segment. Residues 490-491 (LL) are Extracellular-facing. Residues 492–512 (IISQVLLSIGLPFAVVPLIIF) traverse the membrane as a helical segment. Topologically, residues 513–527 (TSSYEIMGEFKNRLS) are cytoplasmic. A helical transmembrane segment spans residues 528-548 (IIIINSIIALFIIGLNLATIF). Topologically, residues 549–565 (QLINDFLHNDSIISKCL) are extracellular. N557 carries an N-linked (GlcNAc...) asparagine glycan. A helical transmembrane segment spans residues 566–586 (TIIFLIPLSIALCCLLLWLII). The Cytoplasmic segment spans residues 587–629 (SKINFFTNLLSKIFNNNNNNNNKNIINNNNNYSGNTINNQTIQ).

The protein belongs to the NRAMP family.

Its subcellular location is the cell membrane. Its function is as follows. Divalent transition metal (iron and manganese) transporter. In Dictyostelium discoideum (Social amoeba), this protein is Natural resistance-associated macrophage protein 2 homolog (nramp2).